Reading from the N-terminus, the 498-residue chain is Hyaluronan-mediated motility receptor (498 aa).

Residues 150–331 are required for interaction with FAM83D; it reads EEMTSERNVF…ITDLQNQLRQ (182 aa). N-linked (GlcNAc...) asparagine glycans are attached at residues asparagine 262 and asparagine 302. 2 hyaluronic acid-binding regions span residues 420–430 and 442–451; these read KQKIKHVVKLK and KLRSQLAKRK. A glycan (N-linked (GlcNAc...) asparagine) is linked at asparagine 483. Threonine 488 carries the post-translational modification Phosphothreonine.

Interacts with ANKRD26. Interacts with DYNLL1. Interacts with FAM83D/CHICA.

The protein localises to the cell surface. The protein resides in the cytoplasm. It is found in the cytoskeleton. Its subcellular location is the spindle. Its function is as follows. Receptor for hyaluronic acid (HA). Involved in cell motility. When hyaluronan binds to HMMR, the phosphorylation of a number of proteins, including the PTK2/FAK1 occurs. May also be involved in cellular transformation and metastasis formation, and in regulating extracellular-regulated kinase (ERK) activity. May act as a regulator of adipogenisis. The protein is Hyaluronan-mediated motility receptor (Hmmr) of Rattus norvegicus (Rat).